Consider the following 272-residue polypeptide: HMP-PP phosphatase (272 aa).

Aspartate 8 acts as the Nucleophile in catalysis. 3 residues coordinate Mg(2+): aspartate 8, aspartate 10, and aspartate 212.

The protein belongs to the HAD-like hydrolase superfamily. Cof family. Requires Mg(2+) as cofactor.

It carries out the reaction 4-amino-2-methyl-5-(diphosphooxymethyl)pyrimidine + H2O = 4-amino-2-methyl-5-(phosphooxymethyl)pyrimidine + phosphate + H(+). Catalyzes the hydrolysis of 4-amino-2-methyl-5-hydroxymethylpyrimidine pyrophosphate (HMP-PP) to 4-amino-2-methyl-5-hydroxymethylpyrimidine phosphate (HMP-P). The polypeptide is HMP-PP phosphatase (Shigella flexneri serotype 5b (strain 8401)).